Here is a 4749-residue protein sequence, read N- to C-terminus: Dynein heavy chain domain-containing protein 1 (4749 aa).

Residues 1–18 (MKPHSQTSPPSLPMPSTS) are compositionally biased toward low complexity. Disordered regions lie at residues 1 to 27 (MKPHSQTSPPSLPMPSTSCRPGQTQKP), 275 to 308 (ESSDTEQAEGEPAGRKLQVASEAPEEKALKKKSS), and 2690 to 2785 (ESLA…KLQS). Over residues 2696-2716 (CEEEEVEEEKVPEVESEEEIA) the composition is skewed to acidic residues. A compositionally biased stretch (polar residues) spans 2738–2749 (QATTGSFLSENS). The stretch at 3197–3224 (CQHQESLIENLVRQHDALKAQQEVFLEQ) forms a coiled coil. The interval 3568 to 3667 (PPKQNRSLEP…SLPSCLTVLS (100 aa)) is disordered. Over residues 3578 to 3593 (SPKESKEKFHVTKQDS) the composition is skewed to basic and acidic residues. The stretch at 3594 to 3636 (GDNTEDELEDENNEEEDEANEQRKEQKAEENKIQGENEQEVQE) forms a coiled coil. A compositionally biased stretch (acidic residues) spans 3595–3612 (DNTEDELEDENNEEEDEA). Positions 3613–3628 (NEQRKEQKAEENKIQG) are enriched in basic and acidic residues. The segment covering 3644-3655 (ESSGSHSSLPSE) has biased composition (low complexity). Polar residues predominate over residues 3656–3667 (TQSLPSCLTVLS). Coiled coils occupy residues 3818–3838 (MVRTQAKICQLNAQMEELEDQ) and 4431–4451 (ERQLQQRLAQAKKRLVALQAL).

It belongs to the dynein heavy chain family. In terms of tissue distribution, expressed in spermatozoa (at protein level).

It localises to the cell projection. It is found in the cilium. Its subcellular location is the flagellum. Its function is as follows. Essential for the normal function of sperm flagella axonemes. The protein is Dynein heavy chain domain-containing protein 1 (Dnhd1) of Mus musculus (Mouse).